We begin with the raw amino-acid sequence, 458 residues long: Adenylosuccinate synthetase (458 aa).

Residues 11–17 and 39–41 contribute to the GTP site; these read GDEGKGG and GHT. Asp-12 (proton acceptor) is an active-site residue. Mg(2+) contacts are provided by Asp-12 and Gly-39. Residues 12 to 15, 37 to 40, Thr-127, Arg-141, Gln-232, Thr-247, and Arg-330 contribute to the IMP site; these read DEGK and NAGH. His-40 functions as the Proton donor in the catalytic mechanism. Substrate is bound at residue 326–332; it reads TVTGRPR. GTP contacts are provided by residues Arg-332, 358 to 360, and 443 to 445; these read HLD and GVG.

This sequence belongs to the adenylosuccinate synthetase family. Homodimer. Requires Mg(2+) as cofactor.

Its subcellular location is the cytoplasm. It carries out the reaction IMP + L-aspartate + GTP = N(6)-(1,2-dicarboxyethyl)-AMP + GDP + phosphate + 2 H(+). It participates in purine metabolism; AMP biosynthesis via de novo pathway; AMP from IMP: step 1/2. In terms of biological role, plays an important role in the de novo pathway of purine nucleotide biosynthesis. Catalyzes the first committed step in the biosynthesis of AMP from IMP. In Haloarcula marismortui (strain ATCC 43049 / DSM 3752 / JCM 8966 / VKM B-1809) (Halobacterium marismortui), this protein is Adenylosuccinate synthetase.